We begin with the raw amino-acid sequence, 501 residues long: Cytochrome P450 monooxygeanse terP (501 aa).

Residues 2-22 (PSLLLSLLLLQVPIICAWLLV) form a helical membrane-spanning segment. Residue C441 coordinates heme.

Belongs to the cytochrome P450 family. It depends on heme as a cofactor.

It is found in the membrane. Its pathway is secondary metabolite biosynthesis. Functionally, cytochrome P450 monooxygeanse; part of the gene cluster that mediates the biosynthesis of terpendoles, indole-diterpene (IDT) mycotoxins including terpendole I, terpendole K, terpendole C, as well as the kinesin Eg5 inhibitor terpendole E. TerP has dual activity and is able to convert terpendole E to 13-desoxyterpendole I and paspaline to 13-desoxypaxilline. Terpendoles biosynthesis begins with the synthesis of geranylgeranyl diphosphate (GGPP) by a yet unidentified GGPP synthase. Condensation of indole-3-glycerol phosphate with GGPP by the prenyltransferase terC then forms 3-geranylgeranylindole (3-GGI), followed by epoxidation and cyclization of this intermediate (by the FAD-dependent monooxygeanse terM and the terpene cyclase terB) to form paspaline. The cytochrome monooxygenase terQ then hydroxylates paspalline at C-11 to yield terpendole E. The cytochrome monooxygenase terP converts terpendole E to 13-desoxyterpendole I, and terQ converts 13-desoxyterpendole I into terpendole I. TerF and terK are required for conversion of terpendole I to terpendole C which is further converted to terpendole K. The chain is Cytochrome P450 monooxygeanse terP from Tolypocladium album (Soil fungus).